A 503-amino-acid polypeptide reads, in one-letter code: Ferulic acid decarboxylase 1 (503 aa).

Asn170, His193, and Glu236 together coordinate Mn(2+). Prenylated FMN contacts are provided by residues Asn170–Arg175, Gln192–His193, and Glu236. Glu285 serves as the catalytic Proton donor. Lys394 contributes to the prenylated FMN binding site.

The protein belongs to the UbiD family. UbiD-like/FDC subfamily. In terms of assembly, homodimer. May form higher order oligomers. It depends on Mn(2+) as a cofactor. Prenylated FMN is required as a cofactor.

The protein resides in the cytoplasm. It catalyses the reaction (E)-4-coumarate + H(+) = 4-vinylphenol + CO2. The catalysed reaction is (E)-cinnamate + H(+) = styrene + CO2. The enzyme catalyses (E)-ferulate + H(+) = 2-methoxy-4-vinylphenol + CO2. Functionally, catalyzes the reversible decarboxylation of aromatic carboxylic acids like ferulic acid, p-coumaric acid or cinnamic acid, producing the corresponding vinyl derivatives 4-vinylphenol, 4-vinylguaiacol, and styrene, respectively, which play the role of aroma metabolites. Not essential for ubiquinone synthesis. The sequence is that of Ferulic acid decarboxylase 1 from Saccharomyces cerevisiae (strain ATCC 204508 / S288c) (Baker's yeast).